The primary structure comprises 163 residues: Nucleotide-binding protein GTNG_0630 (163 aa).

The protein belongs to the YajQ family.

Nucleotide-binding protein. The chain is Nucleotide-binding protein GTNG_0630 from Geobacillus thermodenitrificans (strain NG80-2).